We begin with the raw amino-acid sequence, 438 residues long: Transmembrane protein 184C (438 aa).

7 helical membrane-spanning segments follow: residues 17-37 (LVAV…VWEL), 48-68 (AWFI…WVIL), 86-106 (ILWM…YPGI), 179-199 (YTVV…LGIY), 212-232 (YLVI…LLFY), 254-274 (VVFV…VGVI), and 287-307 (AVAT…AAIA). Positions 355–438 (RGHPRKKLFP…KEPSDKSVDS (84 aa)) are disordered. 2 stretches are compositionally biased toward low complexity: residues 374–390 (SLLS…ASSM) and 404–413 (TVTPQTTPTT). Ser-422 bears the Phosphoserine mark. Basic and acidic residues predominate over residues 425–438 (IGEKKEPSDKSVDS).

Belongs to the TMEM184 family. Widely expressed with higher expression in lung, kidney, spleen, pancreas, thymus, prostate, testis, ovary, small intestine and thyroid.

It is found in the membrane. Possible tumor suppressor which may play a role in cell growth. The sequence is that of Transmembrane protein 184C (TMEM184C) from Homo sapiens (Human).